A 64-amino-acid polypeptide reads, in one-letter code: Large ribosomal subunit protein bL35 (64 aa).

The protein belongs to the bacterial ribosomal protein bL35 family.

This is Large ribosomal subunit protein bL35 from Aliivibrio fischeri (strain ATCC 700601 / ES114) (Vibrio fischeri).